The following is a 101-amino-acid chain: Transcription factor ILI2 (101 aa).

The interval methionine 1–glutamate 22 is disordered. In terms of domain architecture, bHLH spans arginine 8–leucine 63.

It belongs to the bHLH protein family.

Functionally, atypical and probable non DNA-binding bHLH transcription factor that integrates multiple signaling pathways to regulate cell elongation and plant development. The chain is Transcription factor ILI2 (ILI2) from Oryza sativa subsp. indica (Rice).